The chain runs to 60 residues: MAVPKRKKSKSRRNMHRSHHAIEPKNVVVCSTTGEFMLPHNVAVDGSYKGKRVFIKQQAE.

A compositionally biased stretch (basic residues) spans 1–19; that stretch reads MAVPKRKKSKSRRNMHRSH. The segment at 1-24 is disordered; that stretch reads MAVPKRKKSKSRRNMHRSHHAIEP.

The protein belongs to the bacterial ribosomal protein bL32 family.

The protein is Large ribosomal subunit protein bL32 of Wolbachia pipientis wMel.